The following is a 438-amino-acid chain: RING finger protein 150 (438 aa).

The N-terminal stretch at 1 to 34 is a signal peptide; sequence MAMSLIQACCSLALSTWLLSFCFVHLLCLDFTVA. At 35 to 208 the chain is on the extracellular side; the sequence is EKEEWYTAFV…NLQKYVSRTS (174 aa). N-linked (GlcNAc...) asparagine glycans are attached at residues N45, N125, N153, and N186. The region spanning 81–183 is the PA domain; it reads SPKQDARGEV…PKGKEIVSLL (103 aa). The helical transmembrane segment at 209 to 229 threads the bilayer; sequence VVFVSISFIVLMIISLAWLVF. Residues 230–438 lie on the Cytoplasmic side of the membrane; the sequence is YYIQRFRYAN…TDQDCEEVKS (209 aa). The RING-type; atypical zinc-finger motif lies at 278-319; the sequence is CAVCIEGYKPNDVVRILPCRHLFHKSCVDPWLLDHRTCPMCK.

It localises to the membrane. This chain is RING finger protein 150 (RNF150), found in Homo sapiens (Human).